A 128-amino-acid chain; its full sequence is Large ribosomal subunit protein bL19 (128 aa).

The protein belongs to the bacterial ribosomal protein bL19 family.

This protein is located at the 30S-50S ribosomal subunit interface and may play a role in the structure and function of the aminoacyl-tRNA binding site. The chain is Large ribosomal subunit protein bL19 from Bradyrhizobium sp. (strain ORS 278).